Consider the following 134-residue polypeptide: TSC22 domain family protein 3 (134 aa).

An AP1-binding region spans residues 1-60; that stretch reads MNTEMYQTPMEVAVYQLHNFSISFFSSLLGGDVVSVKLDNSASGASVVALDNKIEQAMDL. The interval 76 to 97 is leucine-zipper; it reads LKEQIRELVEKNSQLERENTLL. Residues 101–134 form a disordered region; the sequence is ASPEQLEKFQSRLSPEEPAPEAPETPEAPGGSAV. Position 102 is a phosphoserine (serine 102). Position 125 is a phosphothreonine (threonine 125). The segment covering 125–134 has biased composition (low complexity); it reads TPEAPGGSAV.

The protein belongs to the TSC-22/Dip/Bun family. As to quaternary structure, can form homodimers, however it is likely to function as a monomer. Interacts with NFKB1. Interacts (via N-terminus) with JUN and FOS; these interactions inhibit the binding of active AP1 to its target DNA. Interacts with MYOD1. Interacts with HDAC1; this interaction affects HDAC1 activity on MYOG promoter and thus inhibits MYOD1 transcriptional activity.

Its subcellular location is the cytoplasm. The protein localises to the nucleus. Its function is as follows. Protects T-cells from IL2 deprivation-induced apoptosis through the inhibition of FOXO3A transcriptional activity that leads to the down-regulation of the pro-apoptotic factor BCL2L11. In macrophages, plays a role in the anti-inflammatory and immunosuppressive effects of glucocorticoids and IL10. In T-cells, inhibits anti-CD3-induced NFKB1 nuclear translocation and thereby NFKB1 DNA-binding activities. In vitro, suppresses AP-1 transcription factor complex DNA-binding activities. The sequence is that of TSC22 domain family protein 3 (Tsc22d3) from Rattus norvegicus (Rat).